Here is a 614-residue protein sequence, read N- to C-terminus: Fructokinase-like 2, chloroplastic (614 aa).

The transit peptide at 1–44 (MASLSFTQFLSFPRCNADVPCLLQSHGFVKFRGERWNGKQSFSM) directs the protein to the chloroplast. Disordered regions lie at residues 47–75 (GRRKLSESAPLEEEGNDGNGAVVGKKPSK) and 542–592 (GYPP…YVMK). Acidic residues predominate over residues 548–563 (DMEEEEDDEEEDEVES). Residues 571 to 583 (ITEKEYRTSKPYD) are compositionally biased toward basic and acidic residues.

Belongs to the carbohydrate kinase PfkB family. Interacts with CITRX/TRXz. Binds to FLN1 and PTAC5. Associates with the plastid-encoded RNA polymerase (PEP) complex.

The protein resides in the plastid. It is found in the chloroplast. Functionally, required for proper chloroplast development, most likely through regulating plastid-encoded polymerase (PEP) dependent chloroplast transcription. Acts as a component of the transcriptionally active plastid chromosome that is required for plastid gene expression. This chain is Fructokinase-like 2, chloroplastic, found in Arabidopsis thaliana (Mouse-ear cress).